The primary structure comprises 357 residues: S-adenosyl-L-methionine:benzoic acid/salicylic acid carboxyl methyltransferase 2 (357 aa).

Tyrosine 18 provides a ligand contact to S-adenosyl-L-homocysteine. Glutamine 25 is a binding site for benzoate. S-adenosyl-L-homocysteine-binding residues include cysteine 59, asparagine 64, aspartate 96, leucine 97, serine 135, and phenylalanine 136. Tryptophan 157 is a benzoate binding site. Mg(2+) is bound by residues asparagine 168, aspartate 254, phenylalanine 256, and asparagine 257. Glutamine 260 contacts benzoate.

This sequence belongs to the methyltransferase superfamily. Type-7 methyltransferase family. In terms of tissue distribution, predominantly expressed in petal limbs and tubes of corollas.

It carries out the reaction benzoate + S-adenosyl-L-methionine = methyl benzoate + S-adenosyl-L-homocysteine. The enzyme catalyses salicylate + S-adenosyl-L-methionine = methyl salicylate + S-adenosyl-L-homocysteine. It participates in aromatic compound metabolism. Functionally, converts benzoic acid into the volatile ester methyl benzoates. This scent, mostly produced in a rhythmical, diurnal manner, attracts the pollinators. In Petunia hybrida (Petunia), this protein is S-adenosyl-L-methionine:benzoic acid/salicylic acid carboxyl methyltransferase 2.